The primary structure comprises 87 residues: U-actitoxin-Avd3n (87 aa).

Positions 1 to 16 (MVFLLCFFLVADVSYG) are cleaved as a signal peptide. The BPTI/Kunitz inhibitor domain occupies 21–71 (CLLPKVVGFCRARFPRYYYNSSSRRCEKFIYGGCGGNANNFSSYYECHIKC). Disulfide bonds link cysteine 21/cysteine 71, cysteine 30/cysteine 54, and cysteine 46/cysteine 67. Residues 76-87 (AIIFPEDSPKEN) constitute a propeptide that is removed on maturation.

This sequence belongs to the venom Kunitz-type family. Sea anemone type 2 potassium channel toxin subfamily.

Its subcellular location is the secreted. It is found in the nematocyst. In terms of biological role, kunitz peptide that directly activates neuronal GIRK1/2 (KCNJ3/KCNJ6) channels (EC(50)=80.9 uM) resulting in larger K+ currents. This activation is independent from Gi/o protein activity, and has only a minor effect on Kv1.6/KCNA6 channels (13.5% inhibition at 1 uM). Serine protease inhibitor that inhibits both tissue and plasma kallikreins. Has hemolytic activity. This chain is U-actitoxin-Avd3n, found in Anemonia viridis (Snakelocks anemone).